The chain runs to 124 residues: Small ribosomal subunit protein uS12 (124 aa).

The tract at residues 1–25 (MATINQLVRKPRQASTYKSASPALD) is disordered.

It belongs to the universal ribosomal protein uS12 family. As to quaternary structure, part of the 30S ribosomal subunit. Contacts proteins S8 and S17. May interact with IF1 in the 30S initiation complex.

In terms of biological role, with S4 and S5 plays an important role in translational accuracy. Its function is as follows. Interacts with and stabilizes bases of the 16S rRNA that are involved in tRNA selection in the A site and with the mRNA backbone. Located at the interface of the 30S and 50S subunits, it traverses the body of the 30S subunit contacting proteins on the other side and probably holding the rRNA structure together. The combined cluster of proteins S8, S12 and S17 appears to hold together the shoulder and platform of the 30S subunit. The chain is Small ribosomal subunit protein uS12 from Xylella fastidiosa (strain 9a5c).